The chain runs to 493 residues: Glutamyl-tRNA(Gln) amidotransferase subunit A (493 aa).

Active-site charge relay system residues include lysine 79 and serine 159. The active-site Acyl-ester intermediate is serine 183.

The protein belongs to the amidase family. GatA subfamily. In terms of assembly, heterotrimer of A, B and C subunits.

It catalyses the reaction L-glutamyl-tRNA(Gln) + L-glutamine + ATP + H2O = L-glutaminyl-tRNA(Gln) + L-glutamate + ADP + phosphate + H(+). In terms of biological role, allows the formation of correctly charged Gln-tRNA(Gln) through the transamidation of misacylated Glu-tRNA(Gln) in organisms which lack glutaminyl-tRNA synthetase. The reaction takes place in the presence of glutamine and ATP through an activated gamma-phospho-Glu-tRNA(Gln). This is Glutamyl-tRNA(Gln) amidotransferase subunit A from Rhizobium leguminosarum bv. trifolii (strain WSM2304).